Reading from the N-terminus, the 289-residue chain is ATP synthase gamma chain (289 aa).

The protein belongs to the ATPase gamma chain family. As to quaternary structure, F-type ATPases have 2 components, CF(1) - the catalytic core - and CF(0) - the membrane proton channel. CF(1) has five subunits: alpha(3), beta(3), gamma(1), delta(1), epsilon(1). CF(0) has three main subunits: a, b and c.

It localises to the cell inner membrane. Produces ATP from ADP in the presence of a proton gradient across the membrane. The gamma chain is believed to be important in regulating ATPase activity and the flow of protons through the CF(0) complex. The sequence is that of ATP synthase gamma chain from Coxiella burnetii (strain Dugway 5J108-111).